A 24-amino-acid polypeptide reads, in one-letter code: Small ribosomal subunit protein uS5 (24 aa).

Belongs to the universal ribosomal protein uS5 family. In terms of assembly, part of the 30S ribosomal subunit. Contacts proteins S4 and S8.

Its function is as follows. With S4 and S12 plays an important role in translational accuracy. Located at the back of the 30S subunit body where it stabilizes the conformation of the head with respect to the body. This chain is Small ribosomal subunit protein uS5 (rpsE), found in Vibrio proteolyticus (Aeromonas proteolytica).